The chain runs to 382 residues: DnaJ homolog dnj-20 (382 aa).

An N-terminal signal peptide occupies residues 1–21; it reads MRILNVSLLVLTAFLVDFVEC. One can recognise a J domain in the interval 24 to 89; sequence DFYKILGVSK…EKRAMYDRHG (66 aa).

The polypeptide is DnaJ homolog dnj-20 (Caenorhabditis briggsae).